The sequence spans 251 residues: UPF0309 protein GK1441 (251 aa).

Positions 31 to 214 (VSEAIQNGGI…VLMAENGIEP (184 aa)) constitute an SIS domain.

The protein belongs to the UPF0309 family.

This is UPF0309 protein GK1441 from Geobacillus kaustophilus (strain HTA426).